The primary structure comprises 343 residues: Holliday junction branch migration complex subunit RuvB (343 aa).

The tract at residues 1–181 (MDRIIDSAAT…FGIVQRLEFY (181 aa)) is large ATPase domain (RuvB-L). ATP contacts are provided by residues Ile20, Arg21, Gly62, Lys65, Thr66, Thr67, 128–130 (EDF), Arg171, Tyr181, and Arg218. Position 66 (Thr66) interacts with Mg(2+). The tract at residues 182–252 (SPEDLARIVR…VAQAAMQMLK (71 aa)) is small ATPAse domain (RuvB-S). Residues 255–343 (QGGFDELDRR…SAFTDPEDLF (89 aa)) form a head domain (RuvB-H) region. DNA contacts are provided by Arg291, Arg310, and Arg315.

Belongs to the RuvB family. As to quaternary structure, homohexamer. Forms an RuvA(8)-RuvB(12)-Holliday junction (HJ) complex. HJ DNA is sandwiched between 2 RuvA tetramers; dsDNA enters through RuvA and exits via RuvB. An RuvB hexamer assembles on each DNA strand where it exits the tetramer. Each RuvB hexamer is contacted by two RuvA subunits (via domain III) on 2 adjacent RuvB subunits; this complex drives branch migration. In the full resolvosome a probable DNA-RuvA(4)-RuvB(12)-RuvC(2) complex forms which resolves the HJ.

Its subcellular location is the cytoplasm. The enzyme catalyses ATP + H2O = ADP + phosphate + H(+). The RuvA-RuvB-RuvC complex processes Holliday junction (HJ) DNA during genetic recombination and DNA repair, while the RuvA-RuvB complex plays an important role in the rescue of blocked DNA replication forks via replication fork reversal (RFR). RuvA specifically binds to HJ cruciform DNA, conferring on it an open structure. The RuvB hexamer acts as an ATP-dependent pump, pulling dsDNA into and through the RuvAB complex. RuvB forms 2 homohexamers on either side of HJ DNA bound by 1 or 2 RuvA tetramers; 4 subunits per hexamer contact DNA at a time. Coordinated motions by a converter formed by DNA-disengaged RuvB subunits stimulates ATP hydrolysis and nucleotide exchange. Immobilization of the converter enables RuvB to convert the ATP-contained energy into a lever motion, pulling 2 nucleotides of DNA out of the RuvA tetramer per ATP hydrolyzed, thus driving DNA branch migration. The RuvB motors rotate together with the DNA substrate, which together with the progressing nucleotide cycle form the mechanistic basis for DNA recombination by continuous HJ branch migration. Branch migration allows RuvC to scan DNA until it finds its consensus sequence, where it cleaves and resolves cruciform DNA. In Xylella fastidiosa (strain Temecula1 / ATCC 700964), this protein is Holliday junction branch migration complex subunit RuvB.